Reading from the N-terminus, the 241-residue chain is MALLNRLASALESHRVRDRLIRTLGYCCQLIGGVLVEQCPNRSEVGRRLLVVSAQFNHCRTVLRLFDDLAMFVYTKQYGLGTKEEDIFIRWLSVLSNVTDQLYYPCEHIAWAADAKVLRVDSAWWWTLNTALWTLSLLLGAVKALWTMLKLRQKLRSPTGTSASQLPRSKRRAMEARICSEVLTLLSNLADLANAVHWLPRGVLWAGRFPPWLVGLMGTISSILSTCQAVRAGRQAEADSP.

Topologically, residues 1–122 (MALLNRLASA…ADAKVLRVDS (122 aa)) are cytoplasmic. The helical transmembrane segment at 123-149 (AWWWTLNTALWTLSLLLGAVKALWTML) threads the bilayer. Over 150 to 211 (KLRQKLRSPT…GVLWAGRFPP (62 aa)) the chain is Lumenal. A helical membrane pass occupies residues 212–227 (WLVGLMGTISSILSTC). Over 228–241 (QAVRAGRQAEADSP) the chain is Cytoplasmic.

The protein belongs to the peroxin-11 family. As to quaternary structure, homodimer. Heterodimer with either PEX11A or PEX11B. Interacts with FIS1. In terms of tissue distribution, expressed in liver and at much lower levels in heart, kidney and testis.

It localises to the peroxisome membrane. Its function is as follows. Promotes membrane protrusion and elongation on the peroxisomal surface. The sequence is that of Peroxisomal membrane protein 11C (Pex11g) from Mus musculus (Mouse).